The following is a 535-amino-acid chain: uncharacterized protein (535 aa).

A helical transmembrane segment spans residues 8-24; the sequence is LVVFGSLVFFFGLVKYF. Lys-50 is covalently cross-linked (Glycyl lysine isopeptide (Lys-Gly) (interchain with G-Cter in ubiquitin)). Mn(2+) is bound by residues Asp-316, Asp-327, His-412, Glu-452, and Glu-493.

The protein belongs to the peptidase M24B family. The cofactor is Mn(2+).

It localises to the membrane. This is an uncharacterized protein from Saccharomyces cerevisiae (strain ATCC 204508 / S288c) (Baker's yeast).